The chain runs to 295 residues: Delta-1-pyrroline-5-carboxylate reductase apf3 (295 aa).

The protein belongs to the pyrroline-5-carboxylate reductase family.

It functions in the pathway secondary metabolite biosynthesis. Functionally, delta-1-pyrroline-5-carboxylate reductase; part of the gene cluster that mediates the biosynthesis of the cyclic tetrapeptide apicidin F (APF). The non-ribosomal peptide synthetase apf1 incorporates four different amino acids to produce apicidin F: L-phenylalanine, D-pipecolic acid (D-pip), N-methoxy-L-tryptophan and L-2-aminooctanedioic acid. L-Phenylalanine is the only proteinogenic amino acid directly used by apf1. The 3 other apf1 substrates are non-proteinogenic and have to be modified by other enzymes of the cluster. Lysine is converted to delta-1-pyrroline-5-carboxylate (P5C) which is reduced to L-pipecolic acid (L-pip) by apf3. L-pip is epimerized to D-pip, probably by apf1 activity, prior to incorporation. L-Tryptophan is N-oxidyzed by one of the cytochrome P450 monooxygenases (apf7 or apf8), and further methylated at the hydroxy group by the O-methyltransferase apf6 to yield N-methoxy-L-tryptophan. The synthesis of the fourth apf1 substrate is more complex. The fatty acid synthase apf5 is involved in the synthesis of the octanoic acid backbone of L-2-aminooctanedioic acid by fixing one acetyl-CoA unit and three malonyl-CoA units. Then one of the cytochrome P450 monooxygenases (apf7 or apf8) may oxidize this backbone to 2-oxooctanoic acid. The aminotransferase apf4 is predicted to catalyze the exchange of the keto group with an amino group. The next step would be the oxidation of 2-aminooctanoic acid by one of the cytochrome P450 monooxygenases (apf7 or apf8). The last step is the oxidation of 2-amino-8-hydroxyoctanoic acid to 2-aminooctanedioic acid is catalyzed by the FAD-dependent monooxygenase apf9. The protein is Delta-1-pyrroline-5-carboxylate reductase apf3 of Gibberella fujikuroi (strain CBS 195.34 / IMI 58289 / NRRL A-6831) (Bakanae and foot rot disease fungus).